The primary structure comprises 406 residues: Elongation factor Tu, chloroplastic (406 aa).

Positions 8-210 (KTHINIATIG…LLDSYIPKPK (203 aa)) constitute a tr-type G domain. GTP contacts are provided by residues 17 to 24 (GHFNHGKT), 77 to 81 (DCPGH), and 132 to 135 (NKED). Position 24 (Thr24) interacts with Mg(2+).

It belongs to the TRAFAC class translation factor GTPase superfamily. Classic translation factor GTPase family. EF-Tu/EF-1A subfamily. Monomer.

It localises to the plastid. The protein resides in the chloroplast. It carries out the reaction GTP + H2O = GDP + phosphate + H(+). Functionally, GTP hydrolase that promotes the GTP-dependent binding of aminoacyl-tRNA to the A-site of ribosomes during protein biosynthesis. The sequence is that of Elongation factor Tu, chloroplastic (tufA) from Chaetosphaeridium globosum (Charophycean green alga).